A 217-amino-acid polypeptide reads, in one-letter code: tRNA (guanine-N(7)-)-methyltransferase (217 aa).

Glu-46, Glu-71, Asp-98, and Asp-120 together coordinate S-adenosyl-L-methionine. Residue Asp-120 is part of the active site. Lys-124 provides a ligand contact to substrate. Residues 126 to 131 (RHEKRR) are interaction with RNA. Substrate-binding positions include Asp-156 and 196–199 (TEYE).

This sequence belongs to the class I-like SAM-binding methyltransferase superfamily. TrmB family.

It carries out the reaction guanosine(46) in tRNA + S-adenosyl-L-methionine = N(7)-methylguanosine(46) in tRNA + S-adenosyl-L-homocysteine. Its pathway is tRNA modification; N(7)-methylguanine-tRNA biosynthesis. Catalyzes the formation of N(7)-methylguanine at position 46 (m7G46) in tRNA. The protein is tRNA (guanine-N(7)-)-methyltransferase of Lactobacillus gasseri (strain ATCC 33323 / DSM 20243 / BCRC 14619 / CIP 102991 / JCM 1131 / KCTC 3163 / NCIMB 11718 / NCTC 13722 / AM63).